Here is a 658-residue protein sequence, read N- to C-terminus: Carnitine O-palmitoyltransferase 2, mitochondrial (658 aa).

The transit peptide at Met-1 to Leu-25 directs the protein to the mitochondrion. Topologically, residues Ser-26–Leu-178 are mitochondrial matrix. Lys-69 is subject to N6-succinyllysine. Lys-79 bears the N6-acetyllysine mark. Residue Lys-85 is modified to N6-succinyllysine. Residues Asn-179 to Asn-208 constitute an intramembrane region (note=Mitochondrial inner membrane). Topologically, residues Ala-209–Ser-658 are mitochondrial matrix. Lys-239 carries the post-translational modification N6-acetyllysine; alternate. Lys-239 bears the N6-succinyllysine; alternate mark. Lys-305 bears the N6-acetyllysine mark. His-372 acts as the Proton acceptor in catalysis. The residue at position 418 (Lys-418) is an N6-acetyllysine; alternate. An N6-succinyllysine; alternate modification is found at Lys-418. N6-succinyllysine occurs at positions 424 and 439. Gly-452–Asp-464 serves as a coordination point for CoA. Positions 486, 488, and 499 each coordinate (R)-carnitine. N6-acetyllysine; alternate is present on residues Lys-510 and Lys-544. Residues Lys-510 and Lys-544 each carry the N6-succinyllysine; alternate modification.

The protein belongs to the carnitine/choline acetyltransferase family.

It is found in the mitochondrion inner membrane. The enzyme catalyses (R)-carnitine + hexadecanoyl-CoA = O-hexadecanoyl-(R)-carnitine + CoA. It carries out the reaction octanoyl-CoA + (R)-carnitine = O-octanoyl-(R)-carnitine + CoA. The catalysed reaction is decanoyl-CoA + (R)-carnitine = O-decanoyl-(R)-carnitine + CoA. It catalyses the reaction dodecanoyl-CoA + (R)-carnitine = O-dodecanoyl-R-carnitine + CoA. The enzyme catalyses tetradecanoyl-CoA + (R)-carnitine = O-tetradecanoyl-(R)-carnitine + CoA. It carries out the reaction (R)-carnitine + octadecanoyl-CoA = O-octadecanoyl-(R)-carnitine + CoA. The catalysed reaction is eicosanoyl-CoA + (R)-carnitine = O-eicosanoyl-(R)-carnitine + CoA. It catalyses the reaction (9Z)-tetradecenoyl-CoA + (R)-carnitine = O-(9Z)-tetradecenoyl-(R)-carnitine + CoA. The enzyme catalyses (5Z)-tetradecenoyl-CoA + (R)-carnitine = O-(5Z)-tetradecenoyl-(R)-carnitine + CoA. It carries out the reaction (R)-carnitine + (9Z)-octadecenoyl-CoA = O-(9Z)-octadecenoyl-(R)-carnitine + CoA. The catalysed reaction is 4,8-dimethylnonanoyl-CoA + (R)-carnitine = O-4,8-dimethylnonanoyl-(R)-carnitine + CoA. It functions in the pathway lipid metabolism; fatty acid beta-oxidation. Its function is as follows. Involved in the intramitochondrial synthesis of acylcarnitines from accumulated acyl-CoA metabolites. Reconverts acylcarnitines back into the respective acyl-CoA esters that can then undergo beta-oxidation, an essential step for the mitochondrial uptake of long-chain fatty acids and their subsequent beta-oxidation in the mitochondrion. Active with medium (C8-C12) and long-chain (C14-C18) acyl-CoA esters. The sequence is that of Carnitine O-palmitoyltransferase 2, mitochondrial (CPT2) from Macaca fascicularis (Crab-eating macaque).